Reading from the N-terminus, the 62-residue chain is Defensin BmKDfsin5 (62 aa).

The N-terminal stretch at 1–24 (MKVIALFFLFAFIFCTLEVAIVEA) is a signal peptide. 3 cysteine pairs are disulfide-bonded: Cys-28–Cys-49, Cys-35–Cys-57, and Cys-39–Cys-59.

It belongs to the invertebrate defensin family. Type 2 subfamily. As to expression, highly expressed in non-venom gland (hemolymph) and moderately expressed in venom gland.

It is found in the secreted. Its function is as follows. Antibacterial peptide active against Gram-positive bacteria (including S.aureus ATCC25923 (MIC=2.5 uM), M.luteus AB93113 (MIC=2.5 uM), and the antibiotic-resistant S.epidermidis PRSE P1389 (MIC=1.25 uM)), but not against Gram-negative bacteria (including E.coli and P.aeruginosa). Also has weak blocking activity on Kv1.1/KCNA1 (8.7% inhibition), Kv1.2/KCNA2 (10.2% inhibition), Kv1.3/KCNA3 (9.0% inhibition), KCa3.1/KCNN4/IK (9.1% inhibition), KCa2.3/KCNN3/SK3 (46.3% inhibition) and Kv11.1/KCNH2/ERG1 (16.9% inhibition) channels (tested at 1 uM). It inhibits potassium channel current by interacting with the pore region. The chain is Defensin BmKDfsin5 from Olivierus martensii (Manchurian scorpion).